The primary structure comprises 1637 residues: MEGFEASGEEGKKKSKFKAFKNFFSKKKKKEPEEIPEVAVLKPRFSSSSVSGSSLQPALEKQVMESKPKSGMGVKSISHDSVFCLDPEPEKGAGKLHSSPAPHRSKSLKIKSQRSQRLSISPLIRSEKVCEELEKFFASDRTTTTFRRRSSQCSSTPRMSSELSLDPETSESSTQQFSGFSTPATSQGCLDSSAAKSKIALNPRKQKKRKSTSTPVKVKQEEQLQSVPAKEKTTTKTKEAEQGEQKVDSTELSSQEQSSKTETQDTAVDKTPSTDPALRLNPRRRRRRAKNEWEILERGLLKSTQRYSLNTKAESSANKEIAGKEHSFLKLLLEKKDIGQPTTTEAEVTTVQKMPSDKGDVERELADIDVEAQKEPAPQPTSTDVAESMISGPSPHCEDKKKKDKVGVLPWIKKSTSQKEVTVLRKEEVQVHVHPSRVCGEGEEASCPELQRVQPQMKVSLESTTYHKEKHPRSGLPVPSTSISSATAEDDVSPKMNLPLPLRRRPNTGETSSDSKSTSEYESSSEMQLSPAHSFKPTRKPKDDAGAGTADDEEDGDDEKEEKDNDDDDEENVFLKSENVDVEVSKMEKQQALRYSSKLLGKPKAREASAKLESSSEDERSCEEMTSAHSSQSLEEFEECSESRGFIRGSISEERPATRCHSQALQELEEKEVSTESSSYIEKYESSEDLSSSEQEQQVPPVSKSSLKQWSAPAKPVHPIQTAQQQPPAMVNISGGPKKSGEPLSPTQTVKSRLRSQSECQVLAEPEGVVAADWDILMQPPPRPRLEQEVSAGPELTVFEKSIAVQPSGYPPQPSVKPSIKKEISLGAESAPLESPPPQHHFQPLLKPFVKQQVSAFERVISMDPKLPTQFQPRMKPQGKQSFSSTPESTAFEGSTSVDHMTLTLSQPMLQPYQEVPLESETVAAKMISTGQLHSKYSAHPLSSHQSQPVPESTSAEGEELLPSQPSVTPKFQPLMTQGSIPSAWAIPIYSPAPRMDSKPLMGSAIALESKPSRYSLQPWQSTPFEQVSVTPDHDPAAAAASWSPPIDPPTSRIPSQPLMRLAVKQPTCTELASVSVSQSSSLERLSSRFPFQPRADPEHYGAEEGVATLRRSRRHHSQSPVRSEFKEEVSSGSRRAFGERSISVGKMPPKYALQPWLCPEFQQQAKEGDVLRKAWLSGHPSQTISKHKVEKTPLPPKCPSPFLTRSKVQEISSRLESVIAQESSKKPQRGRPPSKSFVNFMAQQVFSESAPSKVVLHPKPVARGRRRPSRSLLKPKLDDYAFLYNWDNEPKEDTTLQNLPMKQPFQLSRKPEEPQEVLPFSEGAPVKWNTSARGISQALGKLSVSVSLPNEWKSSEGQLPSTQPSQAFDVAKLQSPVLPVDSANVPVKWRISEGHQPPQSFFVDYQPQVSVDSASAAAKGASCWPMLKDSASTTNVKYSQGYKDFTKSTPTSVIKPATFTSAPAQKPMVSMGTYFKDEVPKCCDETGTSSLLPTSKADVENVFGVRLRSTSQKIGMKNPDPCKPFVLISAAARKEQANKGDLQGSVGGSKQSRPAFSFEKKQGNWPRYEGTLKKSEVFRPPVAFYDQKMLHPRTRERLTRRSLSLPPTLPQREEPEWFSVAKKKAQAWSQIANIMQ.

Disordered regions lie at residues 44–121 (RFSS…LSIS), 141–293 (RTTT…KNEW), 341–404 (PTTT…KKKD), 438–759 (VCGE…SQSE), 865–896 (PKLP…EGST), 935–975 (SKYS…FQPL), 1017–1057 (LQPW…IPSQ), 1090–1137 (FPFQ…SRRA), 1182–1238 (SQTI…SKSF), and 1539–1558 (NKGD…PAFS). Over residues 103 to 114 (HRSKSLKIKSQR) the composition is skewed to basic residues. Residues 141–156 (RTTTTFRRRSSQCSST) are compositionally biased toward low complexity. The segment covering 170–190 (SESSTQQFSGFSTPATSQGCL) has biased composition (polar residues). Residues 229–249 (AKEKTTTKTKEAEQGEQKVDS) show a composition bias toward basic and acidic residues. Positions 250 to 261 (TELSSQEQSSKT) are enriched in low complexity. Polar residues predominate over residues 341-353 (PTTTEAEVTTVQK). Residues 355–374 (PSDKGDVERELADIDVEAQK) are compositionally biased toward basic and acidic residues. Residues 508-526 (TGETSSDSKSTSEYESSSE) show a composition bias toward low complexity. Residues 550-572 (ADDEEDGDDEKEEKDNDDDDEEN) are compositionally biased toward acidic residues. Residues 689 to 698 (DLSSSEQEQQ) show a composition bias toward low complexity. Composition is skewed to polar residues over residues 745–759 (SPTQ…SQSE), 879–896 (GKQS…EGST), 935–956 (SKYS…STSA), 964–975 (SQPSVTPKFQPL), and 1017–1030 (LQPW…QVSV).

In terms of assembly, interacts with TOP2B. As to expression, predominantly expressed in testis (at protein level).

It is found in the cytoplasmic vesicle. It localises to the secretory vesicle. The protein resides in the acrosome. This is Acrosomal protein KIAA1210 from Mus musculus (Mouse).